We begin with the raw amino-acid sequence, 1699 residues long: Eukaryotic translation initiation factor 2-alpha kinase gcn-2 (1699 aa).

The region spanning 22–138 is the RWD domain; it reads EEKLALDAVY…HRVREFLTDH (117 aa). Protein kinase domains lie at 108–507 and 508–999; these read LTIL…DVVL and VRNK…DEDL. ATP is bound by residues 114-122, Lys-154, 497-505, and Lys-520; these read MADTWEGCV and LGRGGFGDV. 2 disordered regions span residues 572-615 and 632-725; these read DSSL…SLMP and KEWS…SVFE. A compositionally biased stretch (acidic residues) spans 669-706; that stretch reads SSDDEDDDDSSEIDWDAESEEVEDEESDDSDEEDEDDG. Polar residues predominate over residues 711–720; sequence QLNTETSTGA. The active-site Proton acceptor is the Asp-829.

This sequence belongs to the protein kinase superfamily. Ser/Thr protein kinase family. GCN2 subfamily.

It carries out the reaction L-seryl-[protein] + ATP = O-phospho-L-seryl-[protein] + ADP + H(+). The enzyme catalyses L-threonyl-[protein] + ATP = O-phospho-L-threonyl-[protein] + ADP + H(+). Serine/threonine-protein kinase which phosphorylates the alpha subunit of eukaryotic translation-initiation factor 2 (eIF2alpha), leading to its inactivation and thus to a rapid reduction of translational initiation and repression of global protein synthesis. Involved in the unfolded protein response (UPR) triggered by several stresses including mitochondrial, osmotic and oxidative stresses, amino acid deprivation and UV irradiation, probably by phosphorylating and inhibiting eIF2alpha. In addition, leads to the selective translation/transcription of some mRNA including atf-5, pha-4 and gpdh-1 which are part of the UPR. Required for maintaining lifespan during amino acid starvation. Involved in hypoxia-mediated adaptive protective response. This is Eukaryotic translation initiation factor 2-alpha kinase gcn-2 from Caenorhabditis elegans.